Consider the following 175-residue polypeptide: Receptor activity-modifying protein 2 (175 aa).

Positions 1-42 (MASLRVERAGGPRLPRTRVGRPAALRLLLLLGAVLNPHEALA) are cleaved as a signal peptide. The Extracellular segment spans residues 43-143 (QPLPTTGTPG…VQPTFSDPPE (101 aa)). 2 disulfide bridges follow: Cys-68–Cys-99 and Cys-84–Cys-131. Asn-130 is a glycosylation site (N-linked (GlcNAc...) asparagine). Residues 144-165 (DVLLAMIIAPICLIPFLITLVV) traverse the membrane as a helical segment. Over 166 to 175 (WRSKDSEAQA) the chain is Cytoplasmic.

It belongs to the RAMP family. In terms of assembly, heterodimer of CALCRL and RAMP2; the interaction forms the receptor complex for adrenomedullin/ADM. Heterodimer of CALCR and RAMP2; interaction forms the AMYR2 receptor complex for calcitonin/CALC and amylin/IAPP. Strongly expressed in lung, breast, immune system and fetal tissues.

It localises to the cell membrane. In terms of biological role, accessory protein that interacts with and modulates the function of G-protein coupled receptors including calcitonin gene-related peptide type 1 receptor (CALCRL) and calcitonin receptor (CALCR). Required for the transport of CALCRL to the plasma membrane. Together with CALCRL, form a receptor complex for adrenomedullin/ADM. Together with CALCR, act as a receptor complex for calcitonin/CT/CALC. Together with CALCR, also act as a receptor complex for amylin/IAPP. The protein is Receptor activity-modifying protein 2 of Homo sapiens (Human).